The primary structure comprises 250 residues: 5'/3'-nucleotidase SurE (250 aa).

A divalent metal cation is bound by residues Asp-8, Asp-9, Ser-39, and Asn-92.

It belongs to the SurE nucleotidase family. It depends on a divalent metal cation as a cofactor.

The protein resides in the cytoplasm. The enzyme catalyses a ribonucleoside 5'-phosphate + H2O = a ribonucleoside + phosphate. It catalyses the reaction a ribonucleoside 3'-phosphate + H2O = a ribonucleoside + phosphate. The catalysed reaction is [phosphate](n) + H2O = [phosphate](n-1) + phosphate + H(+). In terms of biological role, nucleotidase with a broad substrate specificity as it can dephosphorylate various ribo- and deoxyribonucleoside 5'-monophosphates and ribonucleoside 3'-monophosphates with highest affinity to 3'-AMP. Also hydrolyzes polyphosphate (exopolyphosphatase activity) with the preference for short-chain-length substrates (P20-25). Might be involved in the regulation of dNTP and NTP pools, and in the turnover of 3'-mononucleotides produced by numerous intracellular RNases (T1, T2, and F) during the degradation of various RNAs. This is 5'/3'-nucleotidase SurE from Wigglesworthia glossinidia brevipalpis.